A 170-amino-acid polypeptide reads, in one-letter code: ATP synthase subunit b (170 aa).

Residues 15–37 (FNLFETNILNWAVVIFGLYKFLP) form a helical membrane-spanning segment. Residues 72-98 (AKKDLSSAEEKASQIKADSLKRSESIR) form a disordered region.

Belongs to the ATPase B chain family. As to quaternary structure, F-type ATPases have 2 components, F(1) - the catalytic core - and F(0) - the membrane proton channel. F(1) has five subunits: alpha(3), beta(3), gamma(1), delta(1), epsilon(1). F(0) has four main subunits: a(1), b(1), b'(1) and c(10-14). The alpha and beta chains form an alternating ring which encloses part of the gamma chain. F(1) is attached to F(0) by a central stalk formed by the gamma and epsilon chains, while a peripheral stalk is formed by the delta, b and b' chains.

It localises to the cellular thylakoid membrane. F(1)F(0) ATP synthase produces ATP from ADP in the presence of a proton or sodium gradient. F-type ATPases consist of two structural domains, F(1) containing the extramembraneous catalytic core and F(0) containing the membrane proton channel, linked together by a central stalk and a peripheral stalk. During catalysis, ATP synthesis in the catalytic domain of F(1) is coupled via a rotary mechanism of the central stalk subunits to proton translocation. Its function is as follows. Component of the F(0) channel, it forms part of the peripheral stalk, linking F(1) to F(0). This Prochlorococcus marinus (strain MIT 9215) protein is ATP synthase subunit b.